Here is a 127-residue protein sequence, read N- to C-terminus: Small ribosomal subunit protein uS12 (127 aa).

D89 carries the 3-methylthioaspartic acid modification.

It belongs to the universal ribosomal protein uS12 family. As to quaternary structure, part of the 30S ribosomal subunit. Contacts proteins S8 and S17. May interact with IF1 in the 30S initiation complex.

Its function is as follows. With S4 and S5 plays an important role in translational accuracy. In terms of biological role, interacts with and stabilizes bases of the 16S rRNA that are involved in tRNA selection in the A site and with the mRNA backbone. Located at the interface of the 30S and 50S subunits, it traverses the body of the 30S subunit contacting proteins on the other side and probably holding the rRNA structure together. The combined cluster of proteins S8, S12 and S17 appears to hold together the shoulder and platform of the 30S subunit. The sequence is that of Small ribosomal subunit protein uS12 from Akkermansia muciniphila (strain ATCC BAA-835 / DSM 22959 / JCM 33894 / BCRC 81048 / CCUG 64013 / CIP 107961 / Muc).